Consider the following 210-residue polypeptide: Eukaryotic translation initiation factor 2 subunit gamma (210 aa).

The tr-type G domain occupies 1-196 (IGHVAHGKST…HLVETITPPR (196 aa)). Positions 2-9 (GHVAHGKS) are G1. A GTP-binding site is contributed by 5–10 (AHGKST). The tract at residues 30 to 34 (NITIK) is G2. Residues 85–88 (DCPG) are G3. GTP is bound by residues 141–144 (NKID) and 174–176 (SAI). Positions 141–144 (NKID) are G4. Residues 174 to 176 (SAI) are G5.

The protein belongs to the TRAFAC class translation factor GTPase superfamily. Classic translation factor GTPase family. EIF2G subfamily. Eukaryotic translation initiation factor 2 eIF2 is a heterotrimeric complex composed of an alpha, a beta and a gamma subunit. The factors eIF-1, eIF-2, eIF-3, TIF5/eIF-5 and methionyl-tRNAi form a multifactor complex (MFC) that may bind to the 40S ribosome.

Its subcellular location is the cytoplasm. It is found in the cytosol. The enzyme catalyses GTP + H2O = GDP + phosphate + H(+). As a subunit of eukaryotic initiation factor 2 eIF2, involved in the early steps of protein synthesis. In the presence of GTP, eIF-2 forms a ternary complex with initiator tRNA Met-tRNAi and then recruits the 40S ribosomal complex and initiation factors eIF-1, eIF-1A and eIF-3 to form the 43S pre-initiation complex (43S PIC), a step that determines the rate of protein translation. The 43S PIC binds to mRNA and scans downstream to the initiation codon, where it forms a 48S initiation complex by codon-anticodon base pairing. This leads to the displacement of eIF-1 to allow GTPase-activating protein (GAP) eIF-5-mediated hydrolysis of eIF2-bound GTP. Hydrolysis of GTP and release of Pi, which makes GTP hydrolysis irreversible, causes the release of the eIF-2-GDP binary complex from the 40S subunit, an event that is essential for the subsequent joining of the 60S ribosomal subunit to form an elongation-competent 80S ribosome. In order for eIF-2 to recycle and catalyze another round of initiation, the GDP bound to eIF-2 must be exchanged with GTP by way of a reaction catalyzed by GDP-GTP exchange factor (GEF) eIF-2B. The sequence is that of Eukaryotic translation initiation factor 2 subunit gamma from Spironucleus vortens.